The sequence spans 193 residues: MRLTDIEIEQALDNGTIVIEPRPSIDAISGVSVDVRLGGQFRVFKDHTAPFIDLSGPSGEMQAALDRVMSEIIEIPDGEAFFLHPGELALAVTYESVTLPADIVGWLDGRSSLARLGLMVHVTAHRIDPGWQGKIVLEFYNSGKLPLALRPRMTIGALNFERLSGPVARPYNTRKNAKYKDQQEAVASRISQD.

DCTP-binding positions include 110–115 (RSSLAR), D128, 136–138 (VLE), Y171, K178, and Q182. E138 serves as the catalytic Proton donor/acceptor. Positions 174 to 193 (RKNAKYKDQQEAVASRISQD) are disordered.

It belongs to the dCTP deaminase family. Homotrimer.

The enzyme catalyses dCTP + H2O + H(+) = dUTP + NH4(+). Its pathway is pyrimidine metabolism; dUMP biosynthesis; dUMP from dCTP (dUTP route): step 1/2. Its function is as follows. Catalyzes the deamination of dCTP to dUTP. This Shewanella sp. (strain W3-18-1) protein is dCTP deaminase.